The sequence spans 208 residues: Protein-L-isoaspartate O-methyltransferase (208 aa).

S59 is a catalytic residue.

It belongs to the methyltransferase superfamily. L-isoaspartyl/D-aspartyl protein methyltransferase family.

Its subcellular location is the cytoplasm. The enzyme catalyses [protein]-L-isoaspartate + S-adenosyl-L-methionine = [protein]-L-isoaspartate alpha-methyl ester + S-adenosyl-L-homocysteine. Functionally, catalyzes the methyl esterification of L-isoaspartyl residues in peptides and proteins that result from spontaneous decomposition of normal L-aspartyl and L-asparaginyl residues. It plays a role in the repair and/or degradation of damaged proteins. This Shigella sonnei (strain Ss046) protein is Protein-L-isoaspartate O-methyltransferase.